The sequence spans 207 residues: Outer-membrane lipoprotein LolB (207 aa).

A signal peptide spans Met-1–Ala-21. Cys-22 carries the N-palmitoyl cysteine lipid modification. The S-diacylglycerol cysteine moiety is linked to residue Cys-22.

This sequence belongs to the LolB family. In terms of assembly, monomer.

It localises to the cell outer membrane. Its function is as follows. Plays a critical role in the incorporation of lipoproteins in the outer membrane after they are released by the LolA protein. This Yersinia pseudotuberculosis serotype O:3 (strain YPIII) protein is Outer-membrane lipoprotein LolB.